The primary structure comprises 182 residues: Adenine phosphoribosyltransferase (182 aa).

Belongs to the purine/pyrimidine phosphoribosyltransferase family. In terms of assembly, homodimer.

Its subcellular location is the cytoplasm. The enzyme catalyses AMP + diphosphate = 5-phospho-alpha-D-ribose 1-diphosphate + adenine. Its pathway is purine metabolism; AMP biosynthesis via salvage pathway; AMP from adenine: step 1/1. Its function is as follows. Catalyzes a salvage reaction resulting in the formation of AMP, that is energically less costly than de novo synthesis. The chain is Adenine phosphoribosyltransferase from Saccharopolyspora erythraea (strain ATCC 11635 / DSM 40517 / JCM 4748 / NBRC 13426 / NCIMB 8594 / NRRL 2338).